A 102-amino-acid polypeptide reads, in one-letter code: Small ribosomal subunit protein uS10 (102 aa).

Belongs to the universal ribosomal protein uS10 family. In terms of assembly, part of the 30S ribosomal subunit.

In terms of biological role, involved in the binding of tRNA to the ribosomes. This chain is Small ribosomal subunit protein uS10, found in Opitutus terrae (strain DSM 11246 / JCM 15787 / PB90-1).